The primary structure comprises 483 residues: Regulatory protein ViaA (483 aa).

This sequence belongs to the ViaA family. Homodimer. Interacts with RavA.

The protein resides in the cytoplasm. Functionally, component of the RavA-ViaA chaperone complex, which may act on the membrane to optimize the function of some of the respiratory chains. ViaA stimulates the ATPase activity of RavA. In Salmonella typhi, this protein is Regulatory protein ViaA.